Consider the following 397-residue polypeptide: Chorismate synthase (397 aa).

NADP(+) contacts are provided by arginine 40 and arginine 46. FMN contacts are provided by residues 129 to 131 (RSS), 257 to 258 (QA), glycine 302, 317 to 321 (KPISS), and arginine 343.

It belongs to the chorismate synthase family. Homotetramer. FMNH2 is required as a cofactor.

The catalysed reaction is 5-O-(1-carboxyvinyl)-3-phosphoshikimate = chorismate + phosphate. Its pathway is metabolic intermediate biosynthesis; chorismate biosynthesis; chorismate from D-erythrose 4-phosphate and phosphoenolpyruvate: step 7/7. Catalyzes the anti-1,4-elimination of the C-3 phosphate and the C-6 proR hydrogen from 5-enolpyruvylshikimate-3-phosphate (EPSP) to yield chorismate, which is the branch point compound that serves as the starting substrate for the three terminal pathways of aromatic amino acid biosynthesis. This reaction introduces a second double bond into the aromatic ring system. This chain is Chorismate synthase, found in Chlorobium phaeobacteroides (strain DSM 266 / SMG 266 / 2430).